The following is a 328-amino-acid chain: Probable E3 ubiquitin-protein ligase RHC1A (328 aa).

Residue serine 2 is modified to N-acetylserine. Residues 190-231 (CPVCKDEFELGSEAKQMPCNHIYHSDCIVPWLVQHNSCPVCR) form an RING-type; atypical zinc finger. The tract at residues 233 to 324 (ELPSASGPSS…QQSYMGYSGW (92 aa)) is disordered. Residues 238 to 250 (SGPSSSQNRTTPT) are compositionally biased toward polar residues. 2 stretches are compositionally biased toward low complexity: residues 251-266 (RNYR…NSRE) and 275-290 (FSSF…SSSS). Residues 291 to 300 (TQNRGGTRNS) are compositionally biased toward polar residues.

The enzyme catalyses S-ubiquitinyl-[E2 ubiquitin-conjugating enzyme]-L-cysteine + [acceptor protein]-L-lysine = [E2 ubiquitin-conjugating enzyme]-L-cysteine + N(6)-ubiquitinyl-[acceptor protein]-L-lysine.. Its pathway is protein modification; protein ubiquitination. In terms of biological role, probable E3 ubiquitin-protein ligase that may possess E3 ubiquitin ligase activity in vitro. The chain is Probable E3 ubiquitin-protein ligase RHC1A from Arabidopsis thaliana (Mouse-ear cress).